The following is a 98-amino-acid chain: Histone H4-1 (98 aa).

Gly residues predominate over residues 1–14; the sequence is MGGKGGKGGKGLGK. The disordered stretch occupies residues 1–20; that stretch reads MGGKGGKGGKGLGKVGAKKR.

Belongs to the histone H4 family. The nucleosome is a histone octamer containing two molecules each of H2A, H2B, H3 and H4 assembled in one H3-H4 heterotetramer and two H2A-H2B heterodimers. The octamer wraps approximately 147 bp of DNA.

Its subcellular location is the nucleus. It localises to the chromosome. Functionally, core component of nucleosome. Nucleosomes wrap and compact DNA into chromatin, limiting DNA accessibility to the cellular machineries which require DNA as a template. Histones thereby play a central role in transcription regulation, DNA repair, DNA replication and chromosomal stability. DNA accessibility is regulated via a complex set of post-translational modifications of histones, also called histone code, and nucleosome remodeling. The sequence is that of Histone H4-1 from Blepharisma japonicum.